Here is a 92-residue protein sequence, read N- to C-terminus: uncharacterized protein (92 aa).

Residues 24-89 (KQIVLKVKEM…AIHKLKYTAE (66 aa)) enclose the HMA domain. Cysteine 35 and cysteine 38 together coordinate a metal cation.

This is an uncharacterized protein from Haemophilus influenzae (strain ATCC 51907 / DSM 11121 / KW20 / Rd).